The following is a 346-amino-acid chain: Probable dual-specificity RNA methyltransferase RlmN (346 aa).

The active-site Proton acceptor is the Glu76. A Radical SAM core domain is found at Ser97 to Asp329. A disulfide bond links Cys104 and Cys334. Residues Cys111, Cys115, and Cys118 each contribute to the [4Fe-4S] cluster site. S-adenosyl-L-methionine-binding positions include Gly162–Glu163, Ser192, Ser215–Asn217, and Asn291. Cys334 functions as the S-methylcysteine intermediate in the catalytic mechanism.

This sequence belongs to the radical SAM superfamily. RlmN family. [4Fe-4S] cluster is required as a cofactor.

It localises to the cytoplasm. The enzyme catalyses adenosine(2503) in 23S rRNA + 2 reduced [2Fe-2S]-[ferredoxin] + 2 S-adenosyl-L-methionine = 2-methyladenosine(2503) in 23S rRNA + 5'-deoxyadenosine + L-methionine + 2 oxidized [2Fe-2S]-[ferredoxin] + S-adenosyl-L-homocysteine. It carries out the reaction adenosine(37) in tRNA + 2 reduced [2Fe-2S]-[ferredoxin] + 2 S-adenosyl-L-methionine = 2-methyladenosine(37) in tRNA + 5'-deoxyadenosine + L-methionine + 2 oxidized [2Fe-2S]-[ferredoxin] + S-adenosyl-L-homocysteine. Specifically methylates position 2 of adenine 2503 in 23S rRNA and position 2 of adenine 37 in tRNAs. This chain is Probable dual-specificity RNA methyltransferase RlmN, found in Koribacter versatilis (strain Ellin345).